The chain runs to 97 residues: YcgL domain-containing protein Pmen_1774 (97 aa).

In terms of domain architecture, YcgL spans 3–87 (RICSIYKSPR…PEEDYIQHLP (85 aa)).

The sequence is that of YcgL domain-containing protein Pmen_1774 from Ectopseudomonas mendocina (strain ymp) (Pseudomonas mendocina).